A 321-amino-acid polypeptide reads, in one-letter code: Nacrein-like protein (321 aa).

The region spanning 1 to 319 (RGPKNWCKVH…NKNVIVYRNH (319 aa)) is the Alpha-carbonic anhydrase domain. The active-site Proton acceptor is the H58.

Belongs to the alpha-carbonic anhydrase family. Component of the organic matrix of calcified shell layers like nacre and prisms.

The protein resides in the secreted. The sequence is that of Nacrein-like protein from Mytilus californianus (California mussel).